Here is a 321-residue protein sequence, read N- to C-terminus: Transcription factor ATOH8 (321 aa).

Disordered stretches follow at residues 59–193 (GLRD…SSYS) and 203–222 (HQDSSASPRKRPGEATAASS). Residues 70-85 (VPVPVPVPVPVAPAVP) are compositionally biased toward pro residues. Positions 93–109 (AGERGGSRAPEVSDARK) are enriched in basic and acidic residues. Residues 121-132 (LPTPPPPPPPAP) show a composition bias toward pro residues. The segment covering 133–143 (QSQAPGGPEAQ) has biased composition (low complexity). Residues 160-186 (PARPAPSAPPAPPAPPESTVRPAPPTR) are compositionally biased toward pro residues. Positions 230 to 243 (TRRLLANARERTRV) are basic motif; degenerate. A bHLH domain is found at 230–282 (TRRLLANARERTRVHTISAAFEALRKQVPCYSYGQKLSKLAILRIACNYILSL). The tract at residues 244-282 (HTISAAFEALRKQVPCYSYGQKLSKLAILRIACNYILSL) is helix-loop-helix motif.

As to quaternary structure, efficient DNA binding requires dimerization with another bHLH protein. Interacts with NEUROG3 and NEUROD1. Interacts with ZFPM2; mediates indirect interaction with GATA4. Forms a heterodimer with TCF3; repress transcription of TCF3 and TCF3/NEUROG3 dimer-induced transactivation of E box-dependent promoters. Expressed in lung, liver, kidney, heart and pancreas. Expressed in endothel of umbilical vessels.

The protein localises to the nucleus. It is found in the nucleus speckle. The protein resides in the cytoplasm. Functionally, transcription factor that binds a palindromic (canonical) core consensus DNA sequence 5'-CANNTG- 3' known as an E-box element, possibly as a heterodimer with other bHLH proteins. Regulates endothelial cell proliferation, migration and tube-like structures formation. Modulates endothelial cell differentiation through NOS3. May be implicated in specification and differentiation of neuronal cell lineages in the brain. May participate in kidney development and may be involved in podocyte differentiation. During early embryonic development is involved in tissue-specific differentiation processes that are dependent on class II bHLH factors and namely modulates the differentiation program initiated by the pro-endocrine factor NEUROG3. During myogenesis, may play a role during the transition of myoblasts from the proliferative phase to the differentiation phase. Positively regulates HAMP transcription in two ways, firstly by acting directly on the HAMP promoter via E-boxes binding and indirectly through increased phosphorylation of SMAD protein complex. Repress NEUROG3-dependent gene activation in a gene-specific manner through at least two mechanisms; requires only either the sequestering of a general partner such as TCF3 through heterodimerization, either also requires binding of the bHLH domain to DNA via a basic motif. In Homo sapiens (Human), this protein is Transcription factor ATOH8.